A 1363-amino-acid polypeptide reads, in one-letter code: Collagen alpha-2(I) chain (1363 aa).

An N-terminal signal peptide occupies residues 1–22; it reads MLSFVDTRILLLLAVTSYLATS. Pyrrolidone carboxylic acid is present on glutamine 23. Positions 23–77 are cleaved as a propeptide — N-terminal propeptide; that stretch reads QHLFQASAGRKGPRGDKGPQGERGPPGPPGRDGEDGPPGPPGPPGPPGLGGNFAA. The interval 28 to 1110 is disordered; it reads ASAGRKGPRG…GPNGGGYEVG (1083 aa). Residues 59–69 show a composition bias toward pro residues; the sequence is PPGPPGPPGPP. Pyrrolidone carboxylic acid is present on glutamine 78. At lysine 83 the chain carries Allysine. Positions 88–97 are enriched in low complexity; sequence GPGPMGLMGP. A compositionally biased stretch (pro residues) spans 98–110; it reads RGPPGASGPPGPP. A compositionally biased stretch (low complexity) spans 112–128; that stretch reads FQGVPGEPGEPGQTGPQ. Basic and acidic residues predominate over residues 140–154; that stretch reads AGEDGHPGKPGRPGE. Position 176 is a 5-hydroxylysine; alternate (lysine 176). O-linked (Gal...) hydroxylysine; alternate glycosylation is present at lysine 176. Composition is skewed to low complexity over residues 224 to 263 and 299 to 320; these read IGAP…PGAK and PGAN…AGAP. Residues 322–335 are compositionally biased toward pro residues; sequence LPGPRGIPGPPGPA. 4-hydroxyproline is present on residues proline 440 and proline 443. Low complexity-rich tracts occupy residues 601–610 and 674–683; these read PAGPIGSRGP and RGLPGAIGAP. Residues 684–699 show a composition bias toward gly residues; the sequence is GPAGGAGDRGEGGPAG. Low complexity predominate over residues 721–736; it reads PSGFAGPPGAAGQPGA. Positions 737 to 746 are enriched in basic and acidic residues; that stretch reads KGERGPKGPK. Composition is skewed to low complexity over residues 748–794, 842–875, 898–931, 955–965, and 986–995; these read ETGP…AGRV, AGEK…LGLP, VSGP…NPGN, PSGALGAPGPH, and VGPAGAFGPR. Over residues 1004-1015 the composition is skewed to basic and acidic residues; that stretch reads RGEKGEPGDKGH. Low complexity predominate over residues 1036 to 1049; it reads QHGDQGPPGNNGPA. Composition is skewed to pro residues over residues 1051–1060 and 1088–1102; these read PRGPPGPSGP and AGPP…PPGP. Positions 1118–1363 are cleaved as a propeptide — C-terminal propeptide; sequence ADQPSLRPKD…GLHIGPVCFK (246 aa). Residues 1128 to 1363 enclose the Fibrillar collagen NC1 domain; sequence YEVDATLKTL…GLHIGPVCFK (236 aa). 3 cysteine pairs are disulfide-bonded: cysteine 1158–cysteine 1190, cysteine 1198–cysteine 1361, and cysteine 1269–cysteine 1314. The Ca(2+) site is built by aspartate 1176, asparagine 1178, glutamine 1179, cysteine 1181, and aspartate 1184. N-linked (GlcNAc...) asparagine glycosylation is present at asparagine 1264.

The protein belongs to the fibrillar collagen family. Trimers of one alpha 2(I) and two alpha 1(I) chains. Post-translationally, prolines at the third position of the tripeptide repeating unit (G-X-Y) are hydroxylated in some or all of the chains. The N-terminus of the mature protein is blocked. In terms of tissue distribution, forms the fibrils of tendon, ligaments and bones. In bones the fibrils are mineralized with calcium hydroxyapatite.

It localises to the secreted. The protein resides in the extracellular space. Its subcellular location is the extracellular matrix. Its function is as follows. Type I collagen is a member of group I collagen (fibrillar forming collagen). The protein is Collagen alpha-2(I) chain (COL1A2) of Gallus gallus (Chicken).